Reading from the N-terminus, the 459-residue chain is Ribulose bisphosphate carboxylase large chain (459 aa).

Lys-4 is modified (N6,N6,N6-trimethyllysine). Positions 113 and 163 each coordinate substrate. Lys-165 serves as the catalytic Proton acceptor. Substrate is bound at residue Lys-167. Mg(2+) contacts are provided by Lys-191, Asp-193, and Glu-194. Lys-191 is modified (N6-carboxylysine). The active-site Proton acceptor is His-284. Residues Arg-285, His-317, and Ser-369 each coordinate substrate.

This sequence belongs to the RuBisCO large chain family. Type I subfamily. Heterohexadecamer of 8 large chains and 8 small chains; disulfide-linked. The disulfide link is formed within the large subunit homodimers. Mg(2+) is required as a cofactor. The disulfide bond which can form in the large chain dimeric partners within the hexadecamer appears to be associated with oxidative stress and protein turnover.

The protein localises to the plastid. It localises to the chloroplast. The enzyme catalyses 2 (2R)-3-phosphoglycerate + 2 H(+) = D-ribulose 1,5-bisphosphate + CO2 + H2O. It carries out the reaction D-ribulose 1,5-bisphosphate + O2 = 2-phosphoglycolate + (2R)-3-phosphoglycerate + 2 H(+). In terms of biological role, ruBisCO catalyzes two reactions: the carboxylation of D-ribulose 1,5-bisphosphate, the primary event in carbon dioxide fixation, as well as the oxidative fragmentation of the pentose substrate in the photorespiration process. Both reactions occur simultaneously and in competition at the same active site. The protein is Ribulose bisphosphate carboxylase large chain of Micranthes integrifolia (Wholeleaf saxifrage).